Consider the following 276-residue polypeptide: 5-deoxy-glucuronate isomerase (276 aa).

Belongs to the isomerase IolB family.

The catalysed reaction is 5-deoxy-D-glucuronate = 5-dehydro-2-deoxy-D-gluconate. It functions in the pathway polyol metabolism; myo-inositol degradation into acetyl-CoA; acetyl-CoA from myo-inositol: step 4/7. In terms of biological role, involved in the isomerization of 5-deoxy-glucuronate (5DG) to 5-dehydro-2-deoxy-D-gluconate (DKG or 2-deoxy-5-keto-D-gluconate). The chain is 5-deoxy-glucuronate isomerase from Geobacillus kaustophilus (strain HTA426).